We begin with the raw amino-acid sequence, 339 residues long: Phenylalanine--tRNA ligase alpha subunit (339 aa).

E250 provides a ligand contact to Mg(2+).

Belongs to the class-II aminoacyl-tRNA synthetase family. Phe-tRNA synthetase alpha subunit type 1 subfamily. As to quaternary structure, tetramer of two alpha and two beta subunits. Requires Mg(2+) as cofactor.

Its subcellular location is the cytoplasm. It carries out the reaction tRNA(Phe) + L-phenylalanine + ATP = L-phenylalanyl-tRNA(Phe) + AMP + diphosphate + H(+). This Azobacteroides pseudotrichonymphae genomovar. CFP2 protein is Phenylalanine--tRNA ligase alpha subunit.